The sequence spans 399 residues: DNA polymerase IV (399 aa).

The UmuC domain maps to 5-187; that stretch reads ILHCDLNNFY…LPVEALLYVG (183 aa). Mg(2+) contacts are provided by Asp9 and Asp105. Residue Glu106 is part of the active site.

It belongs to the DNA polymerase type-Y family. As to quaternary structure, monomer. Mg(2+) is required as a cofactor.

Its subcellular location is the cytoplasm. It carries out the reaction DNA(n) + a 2'-deoxyribonucleoside 5'-triphosphate = DNA(n+1) + diphosphate. Poorly processive, error-prone DNA polymerase involved in untargeted mutagenesis. Copies undamaged DNA at stalled replication forks, which arise in vivo from mismatched or misaligned primer ends. These misaligned primers can be extended by PolIV. Exhibits no 3'-5' exonuclease (proofreading) activity. May be involved in translesional synthesis, in conjunction with the beta clamp from PolIII. In Acetivibrio thermocellus (strain ATCC 27405 / DSM 1237 / JCM 9322 / NBRC 103400 / NCIMB 10682 / NRRL B-4536 / VPI 7372) (Clostridium thermocellum), this protein is DNA polymerase IV.